The following is a 281-amino-acid chain: 33 kDa chaperonin (281 aa).

2 disulfides stabilise this stretch: cysteine 229/cysteine 231 and cysteine 262/cysteine 265.

It belongs to the HSP33 family. Under oxidizing conditions two disulfide bonds are formed involving the reactive cysteines. Under reducing conditions zinc is bound to the reactive cysteines and the protein is inactive.

Its subcellular location is the cytoplasm. In terms of biological role, redox regulated molecular chaperone. Protects both thermally unfolding and oxidatively damaged proteins from irreversible aggregation. Plays an important role in the bacterial defense system toward oxidative stress. This is 33 kDa chaperonin from Pseudoalteromonas translucida (strain TAC 125).